The sequence spans 540 residues: 2-isopropylmalate synthase (540 aa).

A Pyruvate carboxyltransferase domain is found at 8-271; it reads VLIFDTTLRD…NPFFGRESDS (264 aa). Mn(2+) is bound by residues aspartate 17, histidine 208, histidine 210, and asparagine 244. Residues 408-540 are regulatory domain; sequence QLRLVQVSCG…AVLADRRPGI (133 aa).

Belongs to the alpha-IPM synthase/homocitrate synthase family. LeuA type 1 subfamily. In terms of assembly, homodimer. Requires Mn(2+) as cofactor.

The protein localises to the cytoplasm. The catalysed reaction is 3-methyl-2-oxobutanoate + acetyl-CoA + H2O = (2S)-2-isopropylmalate + CoA + H(+). The protein operates within amino-acid biosynthesis; L-leucine biosynthesis; L-leucine from 3-methyl-2-oxobutanoate: step 1/4. Catalyzes the condensation of the acetyl group of acetyl-CoA with 3-methyl-2-oxobutanoate (2-ketoisovalerate) to form 3-carboxy-3-hydroxy-4-methylpentanoate (2-isopropylmalate). The polypeptide is 2-isopropylmalate synthase (Prochlorococcus marinus (strain MIT 9303)).